We begin with the raw amino-acid sequence, 360 residues long: Mannose-1-phosphate guanyltransferase beta-A (360 aa).

It belongs to the transferase hexapeptide repeat family.

The enzyme catalyses alpha-D-mannose 1-phosphate + GTP + H(+) = GDP-alpha-D-mannose + diphosphate. The protein operates within nucleotide-sugar biosynthesis; GDP-alpha-D-mannose biosynthesis; GDP-alpha-D-mannose from alpha-D-mannose 1-phosphate (GTP route): step 1/1. This is Mannose-1-phosphate guanyltransferase beta-A (gmppb-a) from Xenopus laevis (African clawed frog).